Here is a 193-residue protein sequence, read N- to C-terminus: Xanthine phosphoribosyltransferase (193 aa).

Xanthine contacts are provided by Leu-20 and Thr-27. 128–132 is a binding site for 5-phospho-alpha-D-ribose 1-diphosphate; sequence ANGQA. Residue Lys-156 participates in xanthine binding.

It belongs to the purine/pyrimidine phosphoribosyltransferase family. Xpt subfamily. In terms of assembly, homodimer.

Its subcellular location is the cytoplasm. The enzyme catalyses XMP + diphosphate = xanthine + 5-phospho-alpha-D-ribose 1-diphosphate. It functions in the pathway purine metabolism; XMP biosynthesis via salvage pathway; XMP from xanthine: step 1/1. In terms of biological role, converts the preformed base xanthine, a product of nucleic acid breakdown, to xanthosine 5'-monophosphate (XMP), so it can be reused for RNA or DNA synthesis. The chain is Xanthine phosphoribosyltransferase from Streptococcus uberis (strain ATCC BAA-854 / 0140J).